We begin with the raw amino-acid sequence, 833 residues long: DNA ligase (833 aa).

Residues 35-39 (DADYD), 84-85 (SL), and glutamate 115 contribute to the NAD(+) site. The active-site N6-AMP-lysine intermediate is lysine 117. Arginine 138, glutamate 175, lysine 292, and lysine 316 together coordinate NAD(+). Cysteine 410, cysteine 413, cysteine 428, and cysteine 434 together coordinate Zn(2+). The BRCT domain occupies 750–833 (LQTGPLDGQT…AFLGDHGQQP (84 aa)).

The protein belongs to the NAD-dependent DNA ligase family. LigA subfamily. Mg(2+) serves as cofactor. The cofactor is Mn(2+).

It carries out the reaction NAD(+) + (deoxyribonucleotide)n-3'-hydroxyl + 5'-phospho-(deoxyribonucleotide)m = (deoxyribonucleotide)n+m + AMP + beta-nicotinamide D-nucleotide.. In terms of biological role, DNA ligase that catalyzes the formation of phosphodiester linkages between 5'-phosphoryl and 3'-hydroxyl groups in double-stranded DNA using NAD as a coenzyme and as the energy source for the reaction. It is essential for DNA replication and repair of damaged DNA. This chain is DNA ligase, found in Xanthomonas euvesicatoria pv. vesicatoria (strain 85-10) (Xanthomonas campestris pv. vesicatoria).